Here is a 171-residue protein sequence, read N- to C-terminus: uncharacterized protein (171 aa).

A helical transmembrane segment spans residues 5-25 (FLLTIFALWVGGFGYYLYLIN).

The protein localises to the membrane. This is an uncharacterized protein from Rickettsia conorii (strain ATCC VR-613 / Malish 7).